An 818-amino-acid chain; its full sequence is Sodium/hydrogen exchanger 1 (818 aa).

At 1–98 the chain is on the extracellular side; it reads MLLWSGICGL…FPVLGIDYTH (98 aa). Residues 39–76 are disordered; the sequence is PSPTASTIRGSEPPRERSIGDVTTAPPELAPESRPVNH. N75 carries N-linked (GlcNAc...) asparagine glycosylation. A helical transmembrane segment spans residues 99 to 121; that stretch reads VRTPFEISLWILLACLMKIGFHV. The Cytoplasmic portion of the chain corresponds to 122-130; the sequence is IPTISSIVP. The helical transmembrane segment at 131–148 threads the bilayer; it reads ESCLLIVVGLLVGGLIKA. At 149–158 the chain is on the extracellular side; sequence VGETPPFLQS. The chain crosses the membrane as a helical span at residues 159-176; the sequence is EVFFLFLLPPIILDAGYF. The Cytoplasmic portion of the chain corresponds to 177-186; the sequence is LPLRQFTENL. A helical transmembrane segment spans residues 187–215; sequence GTILIFAVVGTLWNAFFLGGLMYAVCLVG. The Extracellular portion of the chain corresponds to 216-222; sequence GEQINNI. A helical transmembrane segment spans residues 223–249; it reads GLLDNLLFGSIISAVDPVAVLAVFEEI. Residues 250-252 lie on the Cytoplasmic side of the membrane; that stretch reads HIN. A helical membrane pass occupies residues 253 to 283; sequence ELLHILVFGESLLNDAVTVVLYHLFEEFANY. Residues 284 to 287 are Extracellular-facing; sequence DRVG. A helical membrane pass occupies residues 288 to 322; the sequence is IVDIVLGFLSFFVVSLGGVFVGVVYGVIAAFTSRF. At 323 to 328 the chain is on the cytoplasmic side; that stretch reads TSHIRV. Residues 329–341 traverse the membrane as a helical segment; that stretch reads IEPLFVFLYSYMA. Topologically, residues 342–350 are extracellular; it reads YLSAELFHL. A helical transmembrane segment spans residues 351-371; that stretch reads SGIMALIASGVVMRPYVEANI. Over 372 to 373 the chain is Cytoplasmic; that stretch reads SH. A helical transmembrane segment spans residues 374-404; sequence KSHTTIKYFLKMWSSVSETLIFIFLGVSTVA. At 405–410 the chain is on the extracellular side; sequence GSHHWN. The chain crosses the membrane as a helical span at residues 411–438; the sequence is WTFVISTLLFCLIARVLGVLGLTWFINK. Over 439–444 the chain is Cytoplasmic; it reads FRIVKL. A helical transmembrane segment spans residues 445–469; it reads TPKDQFIIAYGGLRGAIAFSLGHLL. Residues 470-475 lie on the Extracellular side of the membrane; it reads DKNHFP. The chain crosses the membrane as a helical span at residues 476–505; it reads MCDLFLTAIITVIFFTVFVQGMTIRPLVDL. The interaction with TESC stretch occupies residues 503 to 545; sequence VDLLAVKKKQETKRSINEEIHTQFLDHLLTGIEDICGHYGHHH. The Cytoplasmic segment spans residues 506-818; that stretch reads LAVKKKQETK…EGEPFIPKGQ (313 aa). Residues 509–516 form a PI(4,5)P2-binding region region; that stretch reads KKKQETKR. The interaction with CHP2 stretch occupies residues 515-545; that stretch reads KRSINEEIHTQFLDHLLTGIEDICGHYGHHH. A confers pH-dependent PI(4,5)P2 binding region spans residues 540 to 545; the sequence is HYGHHH. Residues 552–560 form a PI(4,5)P2-binding region region; sequence RFNKKYVKK. S599 and S602 each carry phosphoserine. T603 is modified (phosphothreonine). Residues S605 and S648 each carry the phosphoserine modification. The tract at residues 633-818 is interaction with TESC; that stretch reads KILRNNLQKT…EGEPFIPKGQ (186 aa). The tract at residues 633 to 818 is interaction with CALM1; sequence KILRNNLQKT…EGEPFIPKGQ (186 aa). The segment at 684 to 687 is interaction with PPP3CA; sequence LTVP. Residues S693, S697, and S703 each carry the phosphoserine modification. Residues 715 to 720 form an interaction with PPP3CA region; the sequence is PVITID. A phosphoserine mark is found at S723, S726, and S729. The segment at 739–818 is disordered; that stretch reads GKVLGLSREP…EGEPFIPKGQ (80 aa). Residues T752 and T782 each carry the phosphothreonine modification. Positions 785–794 are enriched in polar residues; sequence PSDSPSSQRI. A phosphoserine mark is found at S788, S790, and S799.

This sequence belongs to the monovalent cation:proton antiporter 1 (CPA1) transporter (TC 2.A.36) family. Homodimer; dimerization is crucial for its function. Oligomer. Interacts with CALM in a calcium-dependent manner. Interacts with TESC. Interacts (via the juxtamembrane region of the cytoplasmic C-terminal domain) with CHP1; the interaction occurs at the plasma membrane in a calcium-dependent manner. Interacts with CHP2; the interaction occurs in a calcium-dependent manner. Interacts with EZR; regulates the cytoskeletal interactions of SLC9A1 and promotes stress fiber formation. Post-translationally, ubiquitinated, leading to its degradation by the proteasome. Ubiquitination is reduced by CHP1. In terms of processing, O-glycosylated. Palmitoylated; may play a major role in SLC9A1 regulation. Post-translationally, phosphorylation at Thr-782 increases SLC9A1 activity. Specifically dephosphorylated at Thr-782 by PPP3CA that negatively regulates SLC9A1 activity. Phosphorylation at Ser-648 by AKT1 reduces SLC9A1 binding to CALM1.

It is found in the cell membrane. The protein localises to the basolateral cell membrane. It carries out the reaction Na(+)(in) + H(+)(out) = Na(+)(out) + H(+)(in). It catalyses the reaction Li(+)(out) + H(+)(in) = Li(+)(in) + H(+)(out). The enzyme catalyses Li(+)(in) + Na(+)(out) = Li(+)(out) + Na(+)(in). With respect to regulation, activated at acidic pHs. Inhibited by cariporide and eniporide. Inhibited by amiloride and 5-amino-substituted derivatives. Phosphatidylinositol 4,5-bisphosphate (PI(4,5)P2) and phosphatidylinositol 3,4,5-trisphosphate (PI(3,4,5)P3) bind and differentially regulate SLC9A1 activity. Functionally, electroneutral Na(+) /H(+) antiporter that extrudes Na(+) in exchange for external protons driven by the inward sodium ion chemical gradient, protecting cells from acidification that occurs from metabolism. Exchanges intracellular H(+) ions for extracellular Na(+) in 1:1 stoichiometry. Plays a key role in maintening intracellular pH neutral and cell volume, and thus is important for cell growth, proliferation, migration and survival. In addition, can transport lithium Li(+) and also functions as a Na(+)/Li(+) antiporter. SLC9A1 also functions in membrane anchoring and organization of scaffolding complexes that coordinate signaling inputs. This is Sodium/hydrogen exchanger 1 (SLC9A1) from Sus scrofa (Pig).